We begin with the raw amino-acid sequence, 480 residues long: Serine carboxypeptidase-like 35 (480 aa).

Residues 1–20 (MKKNALWLLCILVLPAIACG) form the signal peptide. N-linked (GlcNAc...) asparagine glycans are attached at residues Asn79 and Asn146. 3 disulfides stabilise this stretch: Cys95–Cys363, Cys257–Cys270, and Cys294–Cys331. Ser188 is an active-site residue. Asn265 carries an N-linked (GlcNAc...) asparagine glycan. Asn352 is a glycosylation site (N-linked (GlcNAc...) asparagine). Catalysis depends on residues Asp399 and His452.

Belongs to the peptidase S10 family. In terms of tissue distribution, expressed in seedlings, flowers and siliques.

It localises to the secreted. In terms of biological role, probable carboxypeptidase. The polypeptide is Serine carboxypeptidase-like 35 (SCPL35) (Arabidopsis thaliana (Mouse-ear cress)).